The primary structure comprises 1113 residues: Myosin-binding protein 1 (1113 aa).

Residues 12-34 traverse the membrane as a helical segment; it reads LAFNEWLLMFMLFVNSIFSYVIA. A disordered region spans residues 209-229; sequence ESEAVFSDTEPKQESSLNHLP. The GTD-binding domain occupies 888 to 986; the sequence is SEGDRLKRQV…DLEAEIEYFR (99 aa).

Interacts with myosin XI-K, XI-I and XI-1. Expressed in leaf epidermal cells, roots and root hairs.

The protein localises to the endomembrane system. Its function is as follows. Membrane-anchored myosin receptors that define a distinct, plant-specific transport vesicle compartment. In Arabidopsis thaliana (Mouse-ear cress), this protein is Myosin-binding protein 1.